The sequence spans 302 residues: Tegument protein VP22 (302 aa).

Positions 1 to 10 are enriched in basic and acidic residues; that stretch reads MASSDGDRLC. Disordered stretches follow at residues 1–42 and 125–170; these read MASS…PDDS and SFTK…SSWC. The tract at residues 154–244 is interaction with gE; the sequence is RPISFSTAPK…ANEADLGEGA (91 aa). Residues 157 to 170 are compositionally biased toward polar residues; the sequence is SFSTAPKTATSSWC. The short motif at 212-224 is the Nuclear export signal element; it reads LDRLLTGAVIRIT. Residues 243–302 form a disordered region; that stretch reads GASVSKRGHNRKTGDLQGGMGNEPMYAQVRKPKSRTDTQTTGRITNRSRARSASRTDTRK.

Belongs to the alphaherpesvirinae VP22 tegument protein family. As to quaternary structure, interacts with gE (via C-terminus); this interaction is necessary for the recruitment of VP22/ORF9 to the Golgi and its packaging into virions. Interacts with gM (via C-terminus). Interacts with VP16/ORF10; this interaction allows the formation of a tripartite complex composed of VP16/ORF10, VP22/ORF9 and VHS/ORF17. Interacts with the capsid-binding protein ORF44. Interacts with host CGAS. Highly phosphorylated in the host cell. Packaging is selective for underphosphorylated forms.

The protein localises to the virion tegument. It is found in the host cytoplasm. The protein resides in the host nucleus. Its subcellular location is the host Golgi apparatus. In terms of biological role, tegument protein that plays different roles during the time course of infection. Participates in both the accumulation of viral mRNAs and viral protein translation at late time of infection. Modulates the RNase activity of the virion host shutoff protein ORF17 probably to ensure necessary levels of key cellular mRNAs and proteins. Plays a role in microtubule reorganization that occurs after viral infection by stabilizing microtubule network. Plays a role in the inhibition of host innate immune system by targeting the CGAS enzymatic activity which is the principal cytosolic DNA sensor that detects invading viral DNA. Acts by mediating disruption of liquid-like droplets in which CGAS is activated, thereby preventing CGAS activity. In Homo sapiens (Human), this protein is Tegument protein VP22.